The chain runs to 736 residues: 3',5'-cyclic-AMP phosphodiesterase 4B (736 aa).

2 disordered regions span residues 51 to 77 (QLPP…PTTL) and 96 to 116 (DVEN…SSSS). Serine 56 is subject to Phosphoserine. Serine 290 is modified (phosphoserine). Residues 330–659 (VNTENEDHLA…NWYQSMIPQS (330 aa)) form the PDEase domain. Histidine 406 functions as the Proton donor in the catalytic mechanism. Histidine 406 contacts 3',5'-cyclic AMP. AMP contacts are provided by histidine 406 and histidine 410. Residues histidine 410, histidine 446, aspartate 447, and aspartate 564 each contribute to the Zn(2+) site. 4 residues coordinate AMP: aspartate 447, aspartate 564, glutamine 615, and phenylalanine 618. A Mg(2+)-binding site is contributed by aspartate 447. A Mn(2+)-binding site is contributed by aspartate 447. The 3',5'-cyclic AMP site is built by glutamine 615 and phenylalanine 618. 2 positions are modified to phosphoserine: serine 659 and serine 661. The tract at residues 685–736 (EEEDSEGPEKEGEGPNYFSSTKTLCVIDPENRDSLEETDIDIATEDKSLIDT) is disordered.

The protein belongs to the cyclic nucleotide phosphodiesterase family. PDE4 subfamily. Interacts with DISC1. Zn(2+) serves as cofactor. Requires Mg(2+) as cofactor. The cofactor is Mn(2+). As to expression, widely expressed. In terms of tissue distribution, expressed in brain, heart, lung and liver. Expressed in liver and brain.

It is found in the cytoplasm. The protein resides in the cell membrane. It carries out the reaction 3',5'-cyclic AMP + H2O = AMP + H(+). It functions in the pathway purine metabolism; 3',5'-cyclic AMP degradation; AMP from 3',5'-cyclic AMP: step 1/1. Inhibited by rolipram. Its function is as follows. Hydrolyzes the second messenger cAMP, which is a key regulator of many important physiological processes. In Rattus norvegicus (Rat), this protein is 3',5'-cyclic-AMP phosphodiesterase 4B.